A 430-amino-acid chain; its full sequence is BSD domain-containing protein 1 (430 aa).

2 positions are modified to phosphoserine: serine 92 and serine 166. The 53-residue stretch at 146-198 (WLSQFCLEEKKGEISELLVGSPSIRALYTKMVPAAVSHSEFWHRYFYKVHQLE) folds into the BSD domain. Disordered stretches follow at residues 247–298 (STFP…APEA) and 319–398 (LAVD…WEKD). Positions 276 to 291 (PSESSESISLVTQIAN) are enriched in polar residues. The segment covering 350 to 367 (PPARVETLREEAPTDLRV) has biased composition (basic and acidic residues). A Phosphothreonine modification is found at threonine 356. A compositionally biased stretch (polar residues) spans 371 to 390 (NSDSGKSTPSNNGKKGSSTD). Phosphoserine occurs at positions 387, 388, and 418.

The polypeptide is BSD domain-containing protein 1 (BSDC1) (Homo sapiens (Human)).